The primary structure comprises 140 residues: Putative pre-16S rRNA nuclease (140 aa).

Belongs to the YqgF nuclease family.

The protein resides in the cytoplasm. In terms of biological role, could be a nuclease involved in processing of the 5'-end of pre-16S rRNA. The chain is Putative pre-16S rRNA nuclease from Vibrio cholerae serotype O1 (strain ATCC 39541 / Classical Ogawa 395 / O395).